Consider the following 221-residue polypeptide: Orotate phosphoribosyltransferase (221 aa).

Position 26 (Lys-26) interacts with 5-phospho-alpha-D-ribose 1-diphosphate. 34–35 (FF) is a binding site for orotate. 5-phospho-alpha-D-ribose 1-diphosphate contacts are provided by residues 72 to 73 (YK), Arg-99, Lys-100, Lys-103, His-105, and 124 to 132 (DDVITAGTA). Thr-128 and Arg-156 together coordinate orotate.

The protein belongs to the purine/pyrimidine phosphoribosyltransferase family. PyrE subfamily. As to quaternary structure, homodimer. Mg(2+) is required as a cofactor.

It catalyses the reaction orotidine 5'-phosphate + diphosphate = orotate + 5-phospho-alpha-D-ribose 1-diphosphate. It functions in the pathway pyrimidine metabolism; UMP biosynthesis via de novo pathway; UMP from orotate: step 1/2. Catalyzes the transfer of a ribosyl phosphate group from 5-phosphoribose 1-diphosphate to orotate, leading to the formation of orotidine monophosphate (OMP). This chain is Orotate phosphoribosyltransferase, found in Colwellia psychrerythraea (strain 34H / ATCC BAA-681) (Vibrio psychroerythus).